The primary structure comprises 560 residues: Bifunctional NAD(P)H-hydrate repair enzyme (560 aa).

Residues 1 to 241 are NAD(P)H-hydrate epimerase; it reads MLSRLSERCT…WMTAPERMRV (241 aa). In terms of domain architecture, YjeF N-terminal spans 29–235; the sequence is LRDAEPAAAA…SLGLEDWMTA (207 aa). Positions 77-81 are NADPHX 1; for epimerase activity; that stretch reads NNGGD. K(+) contacts are provided by Asn-78 and Asp-145. The interval 149–155 is NADPHX 1; for epimerase activity; that stretch reads GTGICGP. 2 residues coordinate (6S)-NADPHX: Tyr-160 and Asp-178. Ser-181 lines the K(+) pocket. The region spanning 249 to 547 is the YjeF C-terminal domain; the sequence is LDDVYEYFGI…HRVPLIVNAS (299 aa). Residues 249–560 form an ADP-dependent (S)-NAD(P)H-hydrate dehydratase region; it reads LDDVYEYFGI…PASRQRPSGQ (312 aa). Gly-351 contributes to the (6S)-NADPHX binding site. The tract at residues 417–423 is NADPHX 2; for dehydratase activity; it reads HPGEAAR. Residues 454-458 and 475-484 each bind ADP; these read KGPGT and NAGMASGGMG. A (6S)-NADPHX-binding site is contributed by Asp-485.

In the N-terminal section; belongs to the NnrE/AIBP family. This sequence in the C-terminal section; belongs to the NnrD/CARKD family. The cofactor is K(+).

It catalyses the reaction (6S)-NADHX + ADP = AMP + phosphate + NADH + H(+). It carries out the reaction (6S)-NADPHX + ADP = AMP + phosphate + NADPH + H(+). The catalysed reaction is (6R)-NADHX = (6S)-NADHX. The enzyme catalyses (6R)-NADPHX = (6S)-NADPHX. Functionally, bifunctional enzyme that catalyzes the epimerization of the S- and R-forms of NAD(P)HX and the dehydration of the S-form of NAD(P)HX at the expense of ADP, which is converted to AMP. This allows the repair of both epimers of NAD(P)HX, a damaged form of NAD(P)H that is a result of enzymatic or heat-dependent hydration. The chain is Bifunctional NAD(P)H-hydrate repair enzyme from Leishmania major.